The sequence spans 443 residues: Chromosomal replication initiator protein DnaA (443 aa).

The interval 1 to 73 (MYGDYRQIWE…YDAASKVTNR (73 aa)) is domain I, interacts with DnaA modulators. Residues 73 to 106 (RFIEIKILSEDEEEYREIKESIERENSSESTLLS) are domain II. The segment at 107–323 (TLNPKYTFDT…GALIRIVAFA (217 aa)) is domain III, AAA+ region. ATP is bound by residues Gly151, Gly153, Lys154, and Thr155. Positions 324-443 (TLTKSNIDLE…EELKKRIKGY (120 aa)) are domain IV, binds dsDNA.

It belongs to the DnaA family. In terms of assembly, oligomerizes as a right-handed, spiral filament on DNA at oriC.

The protein resides in the cytoplasm. Plays an essential role in the initiation and regulation of chromosomal replication. ATP-DnaA binds to the origin of replication (oriC) to initiate formation of the DNA replication initiation complex once per cell cycle. Binds the DnaA box (a 9 base pair repeat at the origin) and separates the double-stranded (ds)DNA. Forms a right-handed helical filament on oriC DNA; dsDNA binds to the exterior of the filament while single-stranded (ss)DNA is stabiized in the filament's interior. The ATP-DnaA-oriC complex binds and stabilizes one strand of the AT-rich DNA unwinding element (DUE), permitting loading of DNA polymerase. After initiation quickly degrades to an ADP-DnaA complex that is not apt for DNA replication. Binds acidic phospholipids. In Caldanaerobacter subterraneus subsp. tengcongensis (strain DSM 15242 / JCM 11007 / NBRC 100824 / MB4) (Thermoanaerobacter tengcongensis), this protein is Chromosomal replication initiator protein DnaA.